A 197-amino-acid polypeptide reads, in one-letter code: Histone chaperone asf1b-B (197 aa).

It belongs to the ASF1 family. As to quaternary structure, interacts with histone H3 and histone H4.

Its subcellular location is the nucleus. Histone chaperone that facilitates histone deposition and histone exchange and removal during nucleosome assembly and disassembly. This Danio rerio (Zebrafish) protein is Histone chaperone asf1b-B (asf1bb).